Here is a 175-residue protein sequence, read N- to C-terminus: Inorganic pyrophosphatase (175 aa).

3 residues coordinate substrate: Lys-30, Arg-44, and Tyr-56. Asp-66, Asp-71, and Asp-103 together coordinate Mg(2+). Tyr-142 is a binding site for substrate.

It belongs to the PPase family. As to quaternary structure, homohexamer. Mg(2+) serves as cofactor.

The protein resides in the cytoplasm. The catalysed reaction is diphosphate + H2O = 2 phosphate + H(+). Functionally, catalyzes the hydrolysis of inorganic pyrophosphate (PPi) forming two phosphate ions. In Yersinia pestis, this protein is Inorganic pyrophosphatase.